Reading from the N-terminus, the 244-residue chain is tRNA pseudouridine synthase A 2 (244 aa).

Catalysis depends on Asp-52, which acts as the Nucleophile. Tyr-110 lines the substrate pocket.

The protein belongs to the tRNA pseudouridine synthase TruA family. Homodimer.

The enzyme catalyses uridine(38/39/40) in tRNA = pseudouridine(38/39/40) in tRNA. Formation of pseudouridine at positions 38, 39 and 40 in the anticodon stem and loop of transfer RNAs. This Clostridium perfringens (strain 13 / Type A) protein is tRNA pseudouridine synthase A 2.